The chain runs to 393 residues: 5-amino-6-(D-ribitylamino)uracil--L-tyrosine 4-hydroxyphenyl transferase (393 aa).

The 248-residue stretch at 71–318 (VTYVINRNIN…TAVSRIFLGN (248 aa)) folds into the Radical SAM core domain. [4Fe-4S] cluster contacts are provided by Cys85, Cys89, and Cys92.

This sequence belongs to the radical SAM superfamily. CofH family. Consists of two subunits, CofG and CofH. It depends on [4Fe-4S] cluster as a cofactor.

It catalyses the reaction 5-amino-6-(D-ribitylamino)uracil + L-tyrosine + S-adenosyl-L-methionine = 5-amino-5-(4-hydroxybenzyl)-6-(D-ribitylimino)-5,6-dihydrouracil + 2-iminoacetate + 5'-deoxyadenosine + L-methionine + H(+). Its pathway is cofactor biosynthesis; coenzyme F0 biosynthesis. In terms of biological role, catalyzes the radical-mediated synthesis of 5-amino-5-(4-hydroxybenzyl)-6-(D-ribitylimino)-5,6-dihydrouracil from 5-amino-6-(D-ribitylamino)uracil and L-tyrosine. This is 5-amino-6-(D-ribitylamino)uracil--L-tyrosine 4-hydroxyphenyl transferase from Trichodesmium erythraeum (strain IMS101).